The following is a 138-amino-acid chain: Large ribosomal subunit protein bL19 (138 aa).

This sequence belongs to the bacterial ribosomal protein bL19 family.

In terms of biological role, this protein is located at the 30S-50S ribosomal subunit interface and may play a role in the structure and function of the aminoacyl-tRNA binding site. This is Large ribosomal subunit protein bL19 from Rickettsia canadensis (strain McKiel).